We begin with the raw amino-acid sequence, 681 residues long: UvrABC system protein C (681 aa).

The region spanning 16–95 is the GIY-YIG domain; sequence DSPGVYKFRD…IKEYDPRFNV (80 aa). The UVR domain maps to 208–243; the sequence is GTYIRRLERQMTDAAEEMEYEKAARLRDDIGALKKA. Residues 650–681 form a disordered region; the sequence is EIMEDEEPGTTAGSSQEPVSAGTSDERRGQET. Residues 660–672 show a composition bias toward polar residues; the sequence is TAGSSQEPVSAGT.

The protein belongs to the UvrC family. Interacts with UvrB in an incision complex.

It localises to the cytoplasm. The UvrABC repair system catalyzes the recognition and processing of DNA lesions. UvrC both incises the 5' and 3' sides of the lesion. The N-terminal half is responsible for the 3' incision and the C-terminal half is responsible for the 5' incision. The protein is UvrABC system protein C of Streptomyces avermitilis (strain ATCC 31267 / DSM 46492 / JCM 5070 / NBRC 14893 / NCIMB 12804 / NRRL 8165 / MA-4680).